The chain runs to 264 residues: SPRY domain-containing SOCS box protein 2 (264 aa).

The segment covering Met-1–Ala-18 has biased composition (polar residues). The segment at Met-1–Cys-53 is disordered. A compositionally biased stretch (low complexity) spans Ser-21–Ser-34. In terms of domain architecture, B30.2/SPRY spans Pro-26–Arg-221. An SOCS box domain is found at Ala-222 to Lys-264.

It belongs to the SPSB family. As to quaternary structure, component of the probable ECS(SPSB2) E3 ubiquitin-protein ligase complex which contains CUL5, RNF7/RBX2, Elongin BC complex and SPSB2. Interacts with CUL5, RNF7, ELOB and ELOC. Interacts with MET. Interacts (via B30.2/SPRY domain) with PAWR; this interaction occurs in association with the Elongin BC complex. Interacts with NOS2.

Its subcellular location is the cytoplasm. It is found in the cytosol. It functions in the pathway protein modification; protein ubiquitination. Its function is as follows. Substrate recognition component of a SCF-like ECS (Elongin BC-CUL2/5-SOCS-box protein) E3 ubiquitin-protein ligase complex which mediates the ubiquitination and subsequent proteasomal degradation of target proteins. Negatively regulates nitric oxide (NO) production and limits cellular toxicity in activated macrophages by mediating the ubiquitination and proteasomal degradation of NOS2. Acts as a bridge which links NOS2 with the ECS E3 ubiquitin ligase complex components ELOC and CUL5. The sequence is that of SPRY domain-containing SOCS box protein 2 (Spsb2) from Rattus norvegicus (Rat).